Consider the following 1820-residue polypeptide: MEPPQETNRPFSTLDNRSGQVQVLSATPLLQRNPYSSPDIMHIKGSEASSVPYALNQGTTALPKNKNQEGTGHRLLNMLRKTLKESDSEELEITQETPNLVPFGDVVGCLGIHIKNCRHFMPKISLQHYANLFIRISINKAVKCTKMCSLLSKNDEKNTVIKFDEVKYFSVQVPRRYDDKRNNILLELIQYDNREKRAFLLGSVQIHLYEVIQKGCFIEEVQVLHGNIFVCRLEVEFMFSYGNFGYGFSHQLKPLQKITEPSMFMNLAPPPERTDPVTKVITPQTVEYPAFLSPDLNVTVGTPAVQSSNQPSVVRLEKLQQQPRERLEKMKKEYRNLNTWIDKANYLESILMPKLEHKDSEETNIDEASENTKSNHPEEELENIVGVDIPLVNEEAETTANELLDNDSEKGLTIPTLNQSDQDNSTADASKNDESTPSPTEVHSLCTISNQETIKAGRIPPLGERQSESMPDRKMKNVFFPLEVKLKDNYPSILKADSSLSEVAFSPKEYNSPSFRPEYIEFKPKFQFQKFNKNGFDPFLRNINKMSVRKRKDQDIYKYRNILGAEVIEHEDQDPPYPAQSKTAGPANTTWAHDPNIFTTKMLETENKLAPDPTINTIKGLDTKNSLKENLPNVSLPSIKGESSRAGNVQANTCHLSKSLNFTPHIEYLKQSMILKSILSENLQDLSDKLFSKPEVSMNSEAREKSSSPLLSIHDKSSSSMEDNVLEKKQDLNNWLSEKDILNSKTTLSQIIKNIPADSFSEGSQIIENIPADSLLEGGQVIKNIPEYSLSEGGQIIKNIPADSFLESGPGQSPEVEEHVSKKHFEADERDFPIKKNSSTKKKHLISEVPNSKSGSSGTVHDYIMRQIFTAPIFSELEIEVKEPSETPMNLENQLPTPWKRSLSSHILFHEENADEIELPQPRSATSQIIQAFPIDTLLESGIIKVIELDKEHHKSSLLGTGITSPKGNLKDSQEYYSEIRSETEPLSEQSIPIIPKDTTSVSRAEFIQEDQNMFPQDSSYYSIANKELYLPRNGQRLCKDKNDLSSTLESLTNSLMDKLSESDEIMLKSFLKNIFNVFFKYNHSERRGQPEKELERLIQPSFTSDTEHLEELQEDFDKADKLDRKPILSPKLRVFLEELSESEVKHLKSELSKQIQHYLVERLSESGHITKEDLPKIYQNLYLMNEKAEQKGPNSFQGKYSETVKEIMSFVNNFNHHFIDKHLEIKLRSFLKEILQNYFLKNISESSLFNETASETIYPNISSLRTKSVSISFHELEQDISKGSFGRRFEINMKYPLSKSLQNYLIALSENELLHLKADLSKHLQSLFIEKLSKSGLMTKKQLEGINQHINLLNSSSIPLKYIKTHLPFRDDCHFVEKHSEKQNKYSRIVQQTTLQTVSEDKLREAELIREKEKKYFPLQNLKGNSSLIKEQKSYYTKEEAKTPSLIKVQPSSNENIQASPLSKSSEILTDILLKKLRKEHVFTQLPQAENSVHKTEIQDPYSWGGKSKITQSKAWCEKTLKMKSLDRKEHVNIYKWTVQEKPEAVLTSYPRIPNARMPREDEYLNRITFPSWQSSTLTHFNTETGEKSKLEDQYCQTLKGNNNNNKKHLVTFAQYKKEIQTLYIKPDEICSEKCAKFPEIQSFQYKVVEDEKNLKPHLFPELFKIEDLKPKVRKERDRVAQPKKSFNKIVRILPTTLPTTRIHLKKSVPRTLLHWTARRTIHDCSDKFEDLHDMTSFTHLKKVKSRSRLLGKSSDDIHNHARHSARPYTAPEVNKQRESYSGKFTSRRMVSSGLVHINDKTSDYEMHKMRPKKIKRGY.

One can recognise a C2 domain in the interval 87-222 (DSEELEITQE…QKGCFIEEVQ (136 aa)). Disordered stretches follow at residues 360-383 (SEETNIDEASENTKSNHPEEELEN), 403-443 (LLDN…TEVH), 695-722 (EVSMNSEAREKSSSPLLSIHDKSSSSME), and 838-857 (SSTKKKHLISEVPNSKSGSS). The segment covering 415-443 (PTLNQSDQDNSTADASKNDESTPSPTEVH) has biased composition (polar residues).

Component of the CatSper complex or CatSpermasome composed of the core pore-forming members CATSPER1, CATSPER2, CATSPER3 and CATSPER4 as well as auxiliary members CATSPERB, CATSPERG, CATSPERD, CATSPERE, CATSPERZ, C2CD6/CATSPERT, TMEM249, TMEM262 and EFCAB9. HSPA1 may be an additional auxiliary complex member. The core complex members CATSPER1, CATSPER2, CATSPER3 and CATSPER4 form a heterotetrameric channel. The auxiliary CATSPERB, CATSPERG, CATSPERD and CATSPERE subunits form a pavilion-like structure over the pore which stabilizes the complex through interactions with CATSPER4, CATSPER3, CATSPER1 and CATSPER2 respectively. SLCO6C1 interacts with CATSPERE and TMEM262/CATSPERH interacts with CATSPERB, further stabilizing the complex. C2CD6/CATSPERT interacts at least with CATSPERD and is required for targeting the CatSper complex in the flagellar membrane. Expressed in testis (at protein level).

The protein resides in the cell projection. It localises to the cilium. It is found in the flagellum membrane. Its function is as follows. Auxiliary component of the CatSper complex, a complex involved in sperm cell hyperactivation. Sperm cell hyperactivation is needed for sperm motility which is essential late in the preparation of sperm for fertilization. Required for CatSper complex targeting and trafficking into the quadrilinear nanodomains. Targets the preassembled CatSper complexes to elongating flagella, where it links the channel-carrying vesicles and motor proteins. This is Cation channel sperm-associated targeting subunit tau from Homo sapiens (Human).